The chain runs to 428 residues: Histidine--tRNA ligase (428 aa).

This sequence belongs to the class-II aminoacyl-tRNA synthetase family. As to quaternary structure, homodimer.

Its subcellular location is the cytoplasm. It catalyses the reaction tRNA(His) + L-histidine + ATP = L-histidyl-tRNA(His) + AMP + diphosphate + H(+). This chain is Histidine--tRNA ligase, found in Sorangium cellulosum (strain So ce56) (Polyangium cellulosum (strain So ce56)).